A 147-amino-acid polypeptide reads, in one-letter code: Large ribosomal subunit protein uL15 (147 aa).

The segment at 1 to 42 (MTIKVHHLRPAPGAKTTKTRVGRGEGSKGKTAGRGTKGSKAR) is disordered.

Belongs to the universal ribosomal protein uL15 family. As to quaternary structure, part of the 50S ribosomal subunit.

Its function is as follows. Binds to the 23S rRNA. The chain is Large ribosomal subunit protein uL15 from Salinispora tropica (strain ATCC BAA-916 / DSM 44818 / JCM 13857 / NBRC 105044 / CNB-440).